We begin with the raw amino-acid sequence, 419 residues long: Protein-lysine N-methyltransferase EFM2 (419 aa).

S-adenosyl-L-methionine contacts are provided by residues tryptophan 222, 261–263 (GAG), aspartate 290, tryptophan 318, and alanine 340.

The protein belongs to the class I-like SAM-binding methyltransferase superfamily. METTL21 family.

The protein localises to the cytoplasm. Its function is as follows. S-adenosyl-L-methionine-dependent protein-lysine N-methyltransferase that mono- and dimethylates elongation factor 2 (EFT1/EFT2) at 'Lys-613' and methylates elongation factor 3A (YEF3). In Saccharomyces cerevisiae (strain ATCC 204508 / S288c) (Baker's yeast), this protein is Protein-lysine N-methyltransferase EFM2.